Consider the following 188-residue polypeptide: UPF0397 protein LCK_00164 (188 aa).

Helical transmembrane passes span 15-35, 48-68, 79-99, 121-141, and 154-174; these read VVAT…IAIP, GWLA…VGLI, GAPW…LGFG, WQAV…DIII, and AVTT…LLVA.

The protein belongs to the UPF0397 family.

It is found in the cell membrane. This chain is UPF0397 protein LCK_00164, found in Leuconostoc citreum (strain KM20).